Consider the following 352-residue polypeptide: C-X-C chemokine receptor type 4 (352 aa).

The interval 1–21 (MEGISIYTSDNYTEEMGSGDY) is important for chemokine binding and signaling. Residues 1–38 (MEGISIYTSDNYTEEMGSGDYDSIKEPCFREENAHFNR) are Extracellular-facing. Residue Tyr-7 is modified to Sulfotyrosine. Asn-11 carries an N-linked (GlcNAc...) asparagine glycan. Sulfotyrosine is present on Tyr-12. O-linked (Xyl...) (chondroitin sulfate) serine glycosylation is present at Ser-18. Sulfotyrosine is present on Tyr-21. 2 disulfide bridges follow: Cys-28/Cys-274 and Cys-109/Cys-186. The chain crosses the membrane as a helical span at residues 39-63 (IFLPTIYSIIFLTGIVGNGLVILVM). The Cytoplasmic portion of the chain corresponds to 64–77 (GYQKKLRSMTDKYR). The helical transmembrane segment at 78-99 (LHLSVADLLFVITLPFWAVDAV) threads the bilayer. The segment at 94–97 (WAVD) is chemokine binding. The Extracellular portion of the chain corresponds to 100-110 (ANWYFGNFLCK). Residues 111-130 (AVHVIYTVNLYSSVLILAFI) form a helical membrane-spanning segment. The interval 113–117 (HVIYT) is chemokine binding. At 131-154 (SLDRYLAIVHATNSQKPRKLLAEK) the chain is on the cytoplasmic side. An Important for signaling motif is present at residues 133–135 (DRY). Residues 135 to 147 (YLAIVHATNSQKP) form an involved in dimerization; when bound to chemokine region. The chain crosses the membrane as a helical span at residues 155–174 (VVYVGVWIPALLLTIPDFIF). Over 175 to 195 (ASVSEADDRYICDRFYPNDLW) the chain is Extracellular. Residues 186–190 (CDRFY) form a chemokine binding, important for signaling region. Residues 191–210 (PNDLWVVVFQFQHIMVGLIL) form an involved in dimerization region. A helical membrane pass occupies residues 196-216 (VVVFQFQHIMVGLILPGIVIL). Over 217-241 (SCYCIIISKLSHSKGHQKRKALKTT) the chain is Cytoplasmic. The chain crosses the membrane as a helical span at residues 242-261 (VILILAFFACWLPYYIGISI). At 262–282 (DSFILLEIIKQGCEFENTVHK) the chain is on the extracellular side. The tract at residues 266 to 268 (LLE) is involved in dimerization. Residues 283–302 (WISITEALAFFHCCLNPILY) traverse the membrane as a helical segment. The Cytoplasmic portion of the chain corresponds to 303–352 (AFLGAKFKTSAQHALTSVSRGSSLKILSKGKRGGHSSVSTESESSSFHSS). 2 positions are modified to phosphoserine: Ser-319 and Ser-321. 2 positions are modified to phosphoserine; by PKC and GRK6: Ser-324 and Ser-325. The interval 329–352 (LSKGKRGGHSSVSTESESSSFHSS) is disordered. Ser-330 is subject to Phosphoserine; by GRK6. Residue Lys-331 forms a Glycyl lysine isopeptide (Lys-Gly) (interchain with G-Cter in ubiquitin) linkage. Positions 337–352 (HSSVSTESESSSFHSS) are enriched in low complexity. Ser-339 is subject to Phosphoserine; by GRK6. Phosphoserine is present on residues Ser-348 and Ser-351.

This sequence belongs to the G-protein coupled receptor 1 family. Monomer. Can form homodimers. Interacts with CD164. Interacts with ARRB2; the interaction is dependent on the C-terminal phosphorylation of CXCR4 and allows activation of MAPK1 and MAPK3. Interacts with ARR3; the interaction is dependent on the C-terminal phosphorylation of CXCR4 and modulates calcium mobilization. Interacts with RNF113A; the interaction, enhanced by CXCL12, promotes CXCR4 ubiquitination and subsequent degradation. Interacts (via the cytoplasmic C-terminal) with ITCH (via the WW domains I and II); the interaction, enhanced by CXCL12, promotes CXCR4 ubiquitination and leads to its degradation. Interacts with extracellular ubiquitin. Interacts with DBN1; this interaction is enhanced by antigenic stimulation. Following LPS binding, may form a complex with GDF5, HSP90AA1 and HSPA8. In terms of processing, phosphorylated on agonist stimulation. Rapidly phosphorylated on serine and threonine residues in the C-terminal. Phosphorylation at Ser-324 and Ser-325 leads to recruitment of ITCH, ubiquitination and protein degradation. Post-translationally, ubiquitinated after ligand binding, leading to its degradation. Ubiquitinated by ITCH at the cell membrane on agonist stimulation. The ubiquitin-dependent mechanism, endosomal sorting complex required for transport (ESCRT), then targets CXCR4 for lysosomal degradation. This process is dependent also on prior Ser-/Thr-phosphorylation in the C-terminal of CXCR4. Also binding of ARRB1 to STAM negatively regulates CXCR4 sorting to lysosomes though modulating ubiquitination of SFR5S. Sulfation is required for efficient binding of CXCL12/SDF-1alpha and promotes its dimerization. In terms of processing, O- and N-glycosylated. N-glycosylation can mask coreceptor function. The O-glycosylation chondroitin sulfate attachment does not affect interaction with CXCL12/SDF-1alpha nor its coreceptor activity.

It is found in the cell membrane. The protein localises to the cell junction. It localises to the early endosome. The protein resides in the late endosome. Its subcellular location is the lysosome. Functionally, receptor for the C-X-C chemokine CXCL12/SDF-1 that transduces a signal by increasing intracellular calcium ion levels and enhancing MAPK1/MAPK3 activation. Involved in the AKT signaling cascade. Plays a role in regulation of cell migration, e.g. during wound healing. Acts as a receptor for extracellular ubiquitin; leading to enhanced intracellular calcium ions and reduced cellular cAMP levels. Binds bacterial lipopolysaccharide (LPS) et mediates LPS-induced inflammatory response, including TNF secretion by monocytes. Involved in hematopoiesis and in cardiac ventricular septum formation. Also plays an essential role in vascularization of the gastrointestinal tract, probably by regulating vascular branching and/or remodeling processes in endothelial cells. Involved in cerebellar development. In the CNS, could mediate hippocampal-neuron survival. The chain is C-X-C chemokine receptor type 4 (CXCR4) from Macaca fascicularis (Crab-eating macaque).